We begin with the raw amino-acid sequence, 181 residues long: Oligoribonuclease (181 aa).

An Exonuclease domain is found at 8 to 171 (LIWIDLEMTG…DDIRESVAEL (164 aa)). The active site involves tyrosine 129.

It belongs to the oligoribonuclease family. Homodimer.

Its subcellular location is the cytoplasm. Functionally, 3'-to-5' exoribonuclease specific for small oligoribonucleotides. This Escherichia coli O139:H28 (strain E24377A / ETEC) protein is Oligoribonuclease.